The chain runs to 255 residues: Pyrroloquinoline-quinone synthase (255 aa).

It belongs to the PqqC family.

It catalyses the reaction 6-(2-amino-2-carboxyethyl)-7,8-dioxo-1,2,3,4,7,8-hexahydroquinoline-2,4-dicarboxylate + 3 O2 = pyrroloquinoline quinone + 2 H2O2 + 2 H2O + H(+). It functions in the pathway cofactor biosynthesis; pyrroloquinoline quinone biosynthesis. Ring cyclization and eight-electron oxidation of 3a-(2-amino-2-carboxyethyl)-4,5-dioxo-4,5,6,7,8,9-hexahydroquinoline-7,9-dicarboxylic-acid to PQQ. This chain is Pyrroloquinoline-quinone synthase, found in Acinetobacter baylyi (strain ATCC 33305 / BD413 / ADP1).